A 226-amino-acid chain; its full sequence is Clarin-3 (226 aa).

A helical transmembrane segment spans residues 8–28 (LMFLSGFLTSLGSVVVICSIL). Residues N46 and N83 are each glycosylated (N-linked (GlcNAc...) asparagine). The next 3 membrane-spanning stretches (helical) occupy residues 92–112 (VVIILLILSLAASLLSSMFTF), 128–148 (GVYTWNGLSASFVFLTMVLFV), and 181–201 (FWLILLVILLNIVTVVIIIFY).

It belongs to the clarin family.

The protein localises to the membrane. This Rattus norvegicus (Rat) protein is Clarin-3 (Clrn3).